The sequence spans 436 residues: Acetylcholine receptor non-alpha chain (436 aa).

At 1 to 195 the chain is on the extracellular side; the sequence is IIDVHEIDQI…IFYLELRRKP (195 aa). Asn-62 carries N-linked (GlcNAc...) asparagine glycosylation. Cys-89 and Cys-103 are oxidised to a cystine. Residue Asn-140 is glycosylated (N-linked (GlcNAc...) asparagine). 3 helical membrane-spanning segments follow: residues 196–219, 227–245, and 261–280; these read LFYTVNLVFPCVGISFLTIVAFYL, VTLCILILVALTVFYLLLK, and YLLFTMIMVSLSVLVTVISL. The Cytoplasmic segment spans residues 281-404; it reads NLHFRRPSTH…WKFVARVLDR (124 aa). Residues 405–423 form a helical membrane-spanning segment; sequence LFLLLFSIACFLGTILILF.

It belongs to the ligand-gated ion channel (TC 1.A.9) family. Acetylcholine receptor (TC 1.A.9.1) subfamily.

The protein localises to the postsynaptic cell membrane. It is found in the cell membrane. In terms of biological role, after binding acetylcholine, the AChR responds by an extensive change in conformation that affects all subunits and leads to opening of an ion-conducting channel across the plasma membrane. The protein is Acetylcholine receptor non-alpha chain of Onchocerca volvulus.